We begin with the raw amino-acid sequence, 411 residues long: Metacaspase-1B (411 aa).

The segment at 1-97 is disordered; the sequence is MYHRHSAPPP…PPLEAQQFGN (97 aa). Over residues 7-65 the composition is skewed to pro residues; that stretch reads APPPPGRSRGYPPPQQQWPPQPYQYLPYPPQGPPPAHTFPPPAHRSYPSPYPTPPPHSP. Residues histidine 198 and cysteine 254 contribute to the active site.

This sequence belongs to the peptidase C14B family.

Involved in cell death (apoptosis). The sequence is that of Metacaspase-1B (casB) from Neosartorya fischeri (strain ATCC 1020 / DSM 3700 / CBS 544.65 / FGSC A1164 / JCM 1740 / NRRL 181 / WB 181) (Aspergillus fischerianus).